We begin with the raw amino-acid sequence, 119 residues long: NAD(P)H-quinone oxidoreductase subunit M (119 aa).

It belongs to the complex I NdhM subunit family. NDH-1 can be composed of about 15 different subunits; different subcomplexes with different compositions have been identified which probably have different functions.

It is found in the cell inner membrane. The catalysed reaction is a plastoquinone + NADH + (n+1) H(+)(in) = a plastoquinol + NAD(+) + n H(+)(out). The enzyme catalyses a plastoquinone + NADPH + (n+1) H(+)(in) = a plastoquinol + NADP(+) + n H(+)(out). In terms of biological role, NDH-1 shuttles electrons from an unknown electron donor, via FMN and iron-sulfur (Fe-S) centers, to quinones in the respiratory and/or the photosynthetic chain. The immediate electron acceptor for the enzyme in this species is believed to be plastoquinone. Couples the redox reaction to proton translocation, and thus conserves the redox energy in a proton gradient. Cyanobacterial NDH-1 also plays a role in inorganic carbon-concentration. The sequence is that of NAD(P)H-quinone oxidoreductase subunit M from Gloeobacter violaceus (strain ATCC 29082 / PCC 7421).